We begin with the raw amino-acid sequence, 231 residues long: Uracil-DNA glycosylase (231 aa).

Residue aspartate 71 is the Proton acceptor of the active site.

The protein belongs to the uracil-DNA glycosylase (UDG) superfamily. UNG family.

It is found in the cytoplasm. It catalyses the reaction Hydrolyzes single-stranded DNA or mismatched double-stranded DNA and polynucleotides, releasing free uracil.. In terms of biological role, excises uracil residues from the DNA which can arise as a result of misincorporation of dUMP residues by DNA polymerase or due to deamination of cytosine. In Pseudomonas aeruginosa (strain ATCC 15692 / DSM 22644 / CIP 104116 / JCM 14847 / LMG 12228 / 1C / PRS 101 / PAO1), this protein is Uracil-DNA glycosylase.